A 609-amino-acid chain; its full sequence is Meiotically up-regulated gene 28 protein (609 aa).

2 consecutive RRM domains span residues I20–I103 and C419–K499.

The protein localises to the cytoplasm. In terms of biological role, has a role in sporulation. The sequence is that of Meiotically up-regulated gene 28 protein (mug28) from Schizosaccharomyces pombe (strain 972 / ATCC 24843) (Fission yeast).